The sequence spans 360 residues: uncharacterized protein (360 aa).

To P.multocida PM1082.

This is an uncharacterized protein from Pasteurella multocida (strain Pm70).